Reading from the N-terminus, the 423-residue chain is UPF0597 protein TTE0269 (423 aa).

This sequence belongs to the UPF0597 family.

In Caldanaerobacter subterraneus subsp. tengcongensis (strain DSM 15242 / JCM 11007 / NBRC 100824 / MB4) (Thermoanaerobacter tengcongensis), this protein is UPF0597 protein TTE0269.